The primary structure comprises 396 residues: Ribosomal RNA large subunit methyltransferase I (396 aa).

One can recognise a PUA domain in the interval 2–81; the sequence is TVRLFLAKGR…EEINIEFFIR (80 aa).

Belongs to the methyltransferase superfamily. RlmI family.

It is found in the cytoplasm. It carries out the reaction cytidine(1962) in 23S rRNA + S-adenosyl-L-methionine = 5-methylcytidine(1962) in 23S rRNA + S-adenosyl-L-homocysteine + H(+). In terms of biological role, specifically methylates the cytosine at position 1962 (m5C1962) of 23S rRNA. The chain is Ribosomal RNA large subunit methyltransferase I from Serratia proteamaculans (strain 568).